The primary structure comprises 416 residues: Gamma-glutamyl phosphate reductase (416 aa).

This sequence belongs to the gamma-glutamyl phosphate reductase family.

It localises to the cytoplasm. The enzyme catalyses L-glutamate 5-semialdehyde + phosphate + NADP(+) = L-glutamyl 5-phosphate + NADPH + H(+). It participates in amino-acid biosynthesis; L-proline biosynthesis; L-glutamate 5-semialdehyde from L-glutamate: step 2/2. In terms of biological role, catalyzes the NADPH-dependent reduction of L-glutamate 5-phosphate into L-glutamate 5-semialdehyde and phosphate. The product spontaneously undergoes cyclization to form 1-pyrroline-5-carboxylate. The protein is Gamma-glutamyl phosphate reductase of Streptococcus uberis (strain ATCC BAA-854 / 0140J).